Reading from the N-terminus, the 324-residue chain is DNA repair and recombination protein RadA (324 aa).

114–121 serves as a coordination point for ATP; that stretch reads GEFGSGKT.

Belongs to the eukaryotic RecA-like protein family.

Functionally, involved in DNA repair and in homologous recombination. Binds and assemble on single-stranded DNA to form a nucleoprotein filament. Hydrolyzes ATP in a ssDNA-dependent manner and promotes DNA strand exchange between homologous DNA molecules. The protein is DNA repair and recombination protein RadA of Saccharolobus islandicus (strain Y.N.15.51 / Yellowstone #2) (Sulfolobus islandicus).